Reading from the N-terminus, the 224-residue chain is Heme response regulator HssR (224 aa).

Residues 3–116 (NCLIVDDDKK…ELLFRIKAVL (114 aa)) form the Response regulatory domain. D52 is modified (4-aspartylphosphate). Positions 124–222 (DNELQLGNLI…VRGQGYRVDQ (99 aa)) form a DNA-binding region, ompR/PhoB-type.

In terms of processing, phosphorylated by HssS.

It is found in the cytoplasm. Functionally, member of the two-component regulatory system HssS/HssR involved in intracellular heme homeostasis and tempering of staphylococcal virulence. Phosphorylated HssR binds to a direct repeat sequence within hrtAB promoter and activates the expression of hrtAB, an efflux pump, in response to extracellular heme, hemin, hemoglobin or blood. This is Heme response regulator HssR (hssR) from Staphylococcus epidermidis (strain ATCC 12228 / FDA PCI 1200).